The sequence spans 121 residues: Large ribosomal subunit protein uL18 (121 aa).

The protein belongs to the universal ribosomal protein uL18 family. Part of the 50S ribosomal subunit; part of the 5S rRNA/L5/L18/L25 subcomplex. Contacts the 5S and 23S rRNAs.

This is one of the proteins that bind and probably mediate the attachment of the 5S RNA into the large ribosomal subunit, where it forms part of the central protuberance. The polypeptide is Large ribosomal subunit protein uL18 (Caldanaerobacter subterraneus subsp. tengcongensis (strain DSM 15242 / JCM 11007 / NBRC 100824 / MB4) (Thermoanaerobacter tengcongensis)).